The primary structure comprises 284 residues: Bifunctional protein FolD (284 aa).

Residues 164-166 (GRG), Thr189, and Ile230 contribute to the NADP(+) site.

Belongs to the tetrahydrofolate dehydrogenase/cyclohydrolase family. As to quaternary structure, homodimer.

It carries out the reaction (6R)-5,10-methylene-5,6,7,8-tetrahydrofolate + NADP(+) = (6R)-5,10-methenyltetrahydrofolate + NADPH. It catalyses the reaction (6R)-5,10-methenyltetrahydrofolate + H2O = (6R)-10-formyltetrahydrofolate + H(+). It participates in one-carbon metabolism; tetrahydrofolate interconversion. Catalyzes the oxidation of 5,10-methylenetetrahydrofolate to 5,10-methenyltetrahydrofolate and then the hydrolysis of 5,10-methenyltetrahydrofolate to 10-formyltetrahydrofolate. This chain is Bifunctional protein FolD, found in Pelotomaculum thermopropionicum (strain DSM 13744 / JCM 10971 / SI).